Consider the following 817-residue polypeptide: DNA mismatch repair protein MutS (817 aa).

Position 604 to 611 (604 to 611 (GPNMSGKS)) interacts with ATP.

The protein belongs to the DNA mismatch repair MutS family.

Functionally, this protein is involved in the repair of mismatches in DNA. It is possible that it carries out the mismatch recognition step. This protein has a weak ATPase activity. The protein is DNA mismatch repair protein MutS of Petrotoga mobilis (strain DSM 10674 / SJ95).